A 287-amino-acid chain; its full sequence is MNSSYYQNQINRLEKDIADLQKKIADENKKEIDKNKQIDSVHRTINKNTSISTLNSKQRQIDGYQKDILNCRTKIASYQKSIATKSAELGKKRQELLKAQQSEQKKLQDDQLKFQKKLQSEIEIQKRHLETLIAQNYSTQNNKLVSTEDIPEPTKQYDFFISHASEDKDDIVRDLAEALRNNGFEVWYDEFELKIGDSLRKKIDYGLSNANYGIVIISPSFVKKNWTEYELNGMVAREMNGHKVILPIWHKITKDEVLRFSPSLADKLALNTSIHTIDDIVENLKNL.

Residues Lys155–Leu287 enclose the TIR domain. The active site involves Glu230.

Homodimer.

The catalysed reaction is NAD(+) = 2'cADPR + nicotinamide + H(+). Functionally, NAD(+) hydrolase (NADase) that cleaves NAD(+) into nicotinamide and 2' cyclic ADP-D-ribose (2'cADPR). The polypeptide is 2' cyclic ADP-D-ribose synthase BtTIR (Bacteroides thetaiotaomicron).